The sequence spans 64 residues: Alpha-conotoxin-like Ac1.1b (64 aa).

The N-terminal stretch at 1-21 is a signal peptide; that stretch reads MGMRMMFTLFLLVVLTTTVVS. The propeptide occupies 22–47; the sequence is FPSDSASDGRDDEAKDERSDMYKSKR. Residues 23–46 are disordered; the sequence is PSDSASDGRDDEAKDERSDMYKSK. Residues 28 to 44 are compositionally biased toward basic and acidic residues; it reads SDGRDDEAKDERSDMYK. 2 disulfide bridges follow: Cys51/Cys56 and Cys52/Cys62. Cys62 is modified (cysteine amide).

The protein belongs to the conotoxin A superfamily. Expressed by the venom duct.

The protein localises to the secreted. Functionally, alpha-conotoxins act on postsynaptic membranes, they bind to the nicotinic acetylcholine receptors (nAChR) and thus inhibit them. The polypeptide is Alpha-conotoxin-like Ac1.1b (Conus achatinus (Little frog cone)).